A 282-amino-acid polypeptide reads, in one-letter code: Formamidopyrimidine-DNA glycosylase (282 aa).

Pro2 functions as the Schiff-base intermediate with DNA in the catalytic mechanism. Glu3 serves as the catalytic Proton donor. Lys60 serves as the catalytic Proton donor; for beta-elimination activity. DNA is bound by residues His99, Arg118, and Lys163. Residues 248 to 282 (LVYRRSGKNCKKCGEKILREKICGRSTHWCPNCQK) form an FPG-type zinc finger. Catalysis depends on Arg272, which acts as the Proton donor; for delta-elimination activity.

The protein belongs to the FPG family. Monomer. It depends on Zn(2+) as a cofactor.

The catalysed reaction is Hydrolysis of DNA containing ring-opened 7-methylguanine residues, releasing 2,6-diamino-4-hydroxy-5-(N-methyl)formamidopyrimidine.. It catalyses the reaction 2'-deoxyribonucleotide-(2'-deoxyribose 5'-phosphate)-2'-deoxyribonucleotide-DNA = a 3'-end 2'-deoxyribonucleotide-(2,3-dehydro-2,3-deoxyribose 5'-phosphate)-DNA + a 5'-end 5'-phospho-2'-deoxyribonucleoside-DNA + H(+). Functionally, involved in base excision repair of DNA damaged by oxidation or by mutagenic agents. Acts as a DNA glycosylase that recognizes and removes damaged bases. Has a preference for oxidized purines, such as 7,8-dihydro-8-oxoguanine (8-oxoG). Has AP (apurinic/apyrimidinic) lyase activity and introduces nicks in the DNA strand. Cleaves the DNA backbone by beta-delta elimination to generate a single-strand break at the site of the removed base with both 3'- and 5'-phosphates. The polypeptide is Formamidopyrimidine-DNA glycosylase (Prochlorococcus marinus (strain NATL1A)).